The following is a 408-amino-acid chain: Phosphopentomutase (408 aa).

Positions 10, 303, 308, 344, 345, and 356 each coordinate Mn(2+).

It belongs to the phosphopentomutase family. It depends on Mn(2+) as a cofactor.

The protein localises to the cytoplasm. The enzyme catalyses 2-deoxy-alpha-D-ribose 1-phosphate = 2-deoxy-D-ribose 5-phosphate. It carries out the reaction alpha-D-ribose 1-phosphate = D-ribose 5-phosphate. The protein operates within carbohydrate degradation; 2-deoxy-D-ribose 1-phosphate degradation; D-glyceraldehyde 3-phosphate and acetaldehyde from 2-deoxy-alpha-D-ribose 1-phosphate: step 1/2. In terms of biological role, isomerase that catalyzes the conversion of deoxy-ribose 1-phosphate (dRib-1-P) and ribose 1-phosphate (Rib-1-P) to deoxy-ribose 5-phosphate (dRib-5-P) and ribose 5-phosphate (Rib-5-P), respectively. The sequence is that of Phosphopentomutase from Tolumonas auensis (strain DSM 9187 / NBRC 110442 / TA 4).